A 206-amino-acid chain; its full sequence is Outer-membrane lipoprotein carrier protein (206 aa).

Residues 1–21 form the signal peptide; sequence MKKLLCAVLLSPLLYSNAVLA.

The protein belongs to the LolA family. In terms of assembly, monomer.

It localises to the periplasm. In terms of biological role, participates in the translocation of lipoproteins from the inner membrane to the outer membrane. Only forms a complex with a lipoprotein if the residue after the N-terminal Cys is not an aspartate (The Asp acts as a targeting signal to indicate that the lipoprotein should stay in the inner membrane). The sequence is that of Outer-membrane lipoprotein carrier protein from Shewanella sp. (strain MR-7).